We begin with the raw amino-acid sequence, 562 residues long: Arginine--tRNA ligase 2 (562 aa).

The short motif at 122 to 132 (PNIAKPFSMGH) is the 'HIGH' region element.

It belongs to the class-I aminoacyl-tRNA synthetase family. In terms of assembly, monomer.

The protein localises to the cytoplasm. It carries out the reaction tRNA(Arg) + L-arginine + ATP = L-arginyl-tRNA(Arg) + AMP + diphosphate. This is Arginine--tRNA ligase 2 (argS2) from Bacillus anthracis.